Here is a 326-residue protein sequence, read N- to C-terminus: Nucleoporin Nup37 (326 aa).

WD repeat units lie at residues 70–117 (HHGV…KNEY), 122–162 (GHSD…TAHF), 164–203 (LHSP…AILS), and 294–325 (GSVA…WVTE).

In terms of assembly, component of the Nup107-160 subcomplex of the nuclear pore complex (NPC). The Nup107-160 subcomplex includes NUP160, NUP133, NUP107, NUP98, NUP85, NUP43, NUP37, SEH1 and SEC13.

It is found in the chromosome. Its subcellular location is the centromere. The protein resides in the kinetochore. It localises to the nucleus. The protein localises to the nuclear pore complex. Its function is as follows. Component of the Nup107-160 subcomplex of the nuclear pore complex (NPC). The Nup107-160 subcomplex is required for the assembly of a functional NPC. The Nup107-160 subcomplex is also required for normal kinetochore microtubule attachment, mitotic progression and chromosome segregation. The sequence is that of Nucleoporin Nup37 (Nup37) from Mus musculus (Mouse).